A 255-amino-acid chain; its full sequence is tRNA (guanine-N(7)-)-methyltransferase (255 aa).

Positions Met1–Trp29 are disordered. 4 residues coordinate S-adenosyl-L-methionine: Glu86, Glu111, Asp138, and Asp160. Asp160 is an active-site residue. Substrate contacts are provided by residues Lys164, Asp196, and Thr233–Glu236.

It belongs to the class I-like SAM-binding methyltransferase superfamily. TrmB family.

It carries out the reaction guanosine(46) in tRNA + S-adenosyl-L-methionine = N(7)-methylguanosine(46) in tRNA + S-adenosyl-L-homocysteine. It functions in the pathway tRNA modification; N(7)-methylguanine-tRNA biosynthesis. Functionally, catalyzes the formation of N(7)-methylguanine at position 46 (m7G46) in tRNA. This chain is tRNA (guanine-N(7)-)-methyltransferase, found in Ruegeria sp. (strain TM1040) (Silicibacter sp.).